The sequence spans 95 residues: Pyruvate dehydrogenase inhibitor (95 aa).

Belongs to the HesB/IscA family. In terms of assembly, interacts with the E1 module of pyruvate dehydrogenase (PdhA-PdhB).

Functionally, acts as an inhibitor of the pyruvate dehydrogenase. Overexpression does not affect growth with glucose as the main carbon source, but it leads to a dramatic growth defect when cells are grown with pyruvate as the sole carbon source. In Bacillus subtilis (strain 168), this protein is Pyruvate dehydrogenase inhibitor.